The primary structure comprises 465 residues: Solute carrier family 7 member 12 (465 aa).

Residues 1–6 (MQLLRA) lie on the Cytoplasmic side of the membrane. Residues 7-27 (LGVFHVSMILFSATLGTGIFV) form a helical membrane-spanning segment. Residues 28-39 (TPKAVLKYSSLN) are Extracellular-facing. The chain crosses the membrane as a helical span at residues 40–60 (IPVSLSIWAGCGLLSIMSALC). Topologically, residues 61–81 (NAEIATTYPLSGASYYFLKRT) are cytoplasmic. The chain crosses the membrane as a helical span at residues 82 to 102 (LGSSVAFLSLWIKLFAHFLGI). Topologically, residues 103-132 (GAQCLLIATSVIQCFYSGCPAPELPTKCLA) are extracellular. Residues 133-153 (LAILWSFGIVSARGIKTVAWF) traverse the membrane as a helical segment. Residue N154 is a topological domain, cytoplasmic. Residues 155–175 (TVSSFIKLSVLCLISLTVLLV) form a helical membrane-spanning segment. At 176–202 (NGKKENVSRFENALDAELPNASQIADA) the chain is on the extracellular side. The helical transmembrane segment at 203-223 (ILQVSYSYLGSSVLIVIAGEI) threads the bilayer. Residues 224–234 (KRPTETIPKTL) are Cytoplasmic-facing. A helical transmembrane segment spans residues 235 to 255 (IYGISIVTVLYLLTNISYLAV). The Extracellular segment spans residues 256–280 (LTSQEIIFSDSVGVTWMNRVFPSIQ). The chain crosses the membrane as a helical span at residues 281–301 (WISSFLISAFLLGSVSCGIVS). The Cytoplasmic portion of the chain corresponds to 302–327 (ASRVFYSASQEGEFPSIYSMLNDHHS). Residues 328 to 351 (PAVADIQIVILSSVAIISSSIIYL) form a helical membrane-spanning segment. The Extracellular segment spans residues 352-356 (VKYVS). A helical transmembrane segment spans residues 357-375 (LGSFCINLLQMIGLLKIRY). Over 376 to 386 (QNPDIPRPYKV) the chain is Cytoplasmic. Residues 387 to 407 (WLPFIFGSIALSLFLIFTPVI) traverse the membrane as a helical segment. The Extracellular portion of the chain corresponds to 408–409 (QS). The chain crosses the membrane as a helical span at residues 410-430 (PSIEHVYQVVFLFCGFLCYWL). Over 431–465 (QANLNGHATCFDTITCYCQLLFNISPSEDPEEQKN) the chain is Cytoplasmic.

Belongs to the amino acid-polyamine-organocation (APC) superfamily. Probably forms multimers, perhaps with an unknown protein(s). In terms of tissue distribution, expressed in kidney and red blood cells (at protein level). Expressed in kidney along the collecting ducts in the cortex, outer and inner medulla. May be expressed in placenta, lungs, spleen and skeletal muscles.

The protein localises to the apical cell membrane. It localises to the basal cell membrane. The protein resides in the cytoplasm. In terms of biological role, probably mediates sodium- and chloride-independent uptake of neutral amino acids. The chain is Solute carrier family 7 member 12 from Mus musculus (Mouse).